Reading from the N-terminus, the 414-residue chain is Autophagy-related protein 18 (414 aa).

WD repeat units follow at residues methionine 1–glutamate 36, lysine 69–threonine 114, alanine 185–glutamine 225, and serine 230–glutamate 269. The short motif at phenylalanine 226–serine 230 is the L/FRRG motif element. Positions leucine 261 to leucine 314 are disordered. Residues serine 262–threonine 289 are compositionally biased toward polar residues. Residues aspartate 292–serine 302 show a composition bias toward acidic residues. WD repeat units lie at residues lysine 309 to lysine 355 and glycine 367 to glycine 407.

Belongs to the WD repeat PROPPIN family. Component of the PI(3,5)P2 regulatory complex.

The protein localises to the preautophagosomal structure membrane. It localises to the vacuole membrane. Its subcellular location is the endosome membrane. Functionally, the PI(3,5)P2 regulatory complex regulates both the synthesis and turnover of phosphatidylinositol 3,5-bisphosphate (PtdIns(3,5)P2). Necessary for proper vacuole morphology. Plays an important role in osmotically-induced vacuole fragmentation. Required for cytoplasm to vacuole transport (Cvt) vesicle formation, pexophagy and starvation-induced autophagy. Involved in correct atg9 trafficking to the pre-autophagosomal structure. Might also be involved in premeiotic DNA replication. This Aspergillus terreus (strain NIH 2624 / FGSC A1156) protein is Autophagy-related protein 18 (atg18).